Reading from the N-terminus, the 101-residue chain is Urease subunit beta (101 aa).

It belongs to the urease beta subunit family. Heterotrimer of UreA (gamma), UreB (beta) and UreC (alpha) subunits. Three heterotrimers associate to form the active enzyme.

Its subcellular location is the cytoplasm. The enzyme catalyses urea + 2 H2O + H(+) = hydrogencarbonate + 2 NH4(+). It participates in nitrogen metabolism; urea degradation; CO(2) and NH(3) from urea (urease route): step 1/1. This chain is Urease subunit beta, found in Azotobacter vinelandii (strain DJ / ATCC BAA-1303).